A 1091-amino-acid chain; its full sequence is Voltage-dependent calcium channel subunit alpha-2/delta-1 (1091 aa).

The signal sequence occupies residues Met1 to Glu24. Over Glu25–Gly1061 the chain is Extracellular. Residue Asn92 is glycosylated (N-linked (GlcNAc...) asparagine). Residue Ser119 is modified to Phosphoserine. N-linked (GlcNAc...) asparagine glycans are attached at residues Asn136 and Asn184. One can recognise a VWFA domain in the interval Asp252 to Leu429. Positions 258, 260, and 262 each coordinate a divalent metal cation. The short motif at Asp258 to Ser262 is the MIDAS-like motif element. Residues Asn323 and Asn347 are each glycosylated (N-linked (GlcNAc...) asparagine). A disulfide bridge links Cys403 with Cys1047. One can recognise a Cache domain in the interval Trp445–Pro536. N-linked (GlcNAc...) asparagine glycosylation is found at Asn593, Asn769, Asn876, and Asn973. The helical transmembrane segment at Val1062–Leu1082 threads the bilayer. Over Val1083–Trp1091 the chain is Cytoplasmic.

The protein belongs to the calcium channel subunit alpha-2/delta family. In terms of assembly, dimer formed of alpha-2-1 and delta-1 chains; disulfide-linked. Voltage-dependent calcium channels are multisubunit complexes, consisting of alpha-1 (CACNA1), alpha-2 (CACNA2D), beta (CACNB) and delta (CACNA2D) subunits in a 1:1:1:1 ratio. In terms of processing, proteolytically processed into subunits alpha-2-1 and delta-1 that are disulfide-linked.

The protein localises to the membrane. The protein resides in the cell membrane. The alpha-2/delta subunit of voltage-dependent calcium channels regulates calcium current density and activation/inactivation kinetics of the calcium channel. Plays an important role in excitation-contraction coupling. In Rattus norvegicus (Rat), this protein is Voltage-dependent calcium channel subunit alpha-2/delta-1 (Cacna2d1).